Reading from the N-terminus, the 788-residue chain is uncharacterized protein (788 aa).

An Adrift-type SAM-dependent 2'-O-MTase domain is found at 485–693 (EMITTAWIKL…IYIVLKSYKG (209 aa)). Residues G521 and D604 each coordinate S-adenosyl-L-methionine. The active-site Proton acceptor is K645.

This is an uncharacterized protein from Acanthamoeba polyphaga (Amoeba).